Here is a 233-residue protein sequence, read N- to C-terminus: Large ribosomal subunit protein uL1 (233 aa).

Belongs to the universal ribosomal protein uL1 family. In terms of assembly, part of the 50S ribosomal subunit.

Binds directly to 23S rRNA. The L1 stalk is quite mobile in the ribosome, and is involved in E site tRNA release. Its function is as follows. Protein L1 is also a translational repressor protein, it controls the translation of the L11 operon by binding to its mRNA. This chain is Large ribosomal subunit protein uL1, found in Photorhabdus laumondii subsp. laumondii (strain DSM 15139 / CIP 105565 / TT01) (Photorhabdus luminescens subsp. laumondii).